A 233-amino-acid polypeptide reads, in one-letter code: 27 kDa hemolymph glycoprotein (233 aa).

The N-terminal stretch at 1 to 17 (MIWKTLIVAFMATAVLA) is a signal peptide. 2 N-linked (GlcNAc...) asparagine glycosylation sites follow: Asn125 and Asn156.

This sequence belongs to the UPF0408 family. Post-translationally, N-glycosylated. As to expression, hemolymph.

The protein localises to the secreted. The sequence is that of 27 kDa hemolymph glycoprotein from Manduca sexta (Tobacco hawkmoth).